Consider the following 337-residue polypeptide: GTP 3',8-cyclase (337 aa).

The Radical SAM core domain occupies 17–242 (TFQREYYYLR…RQKDRTDGPA (226 aa)). Residue Arg26 participates in GTP binding. Residues Cys33 and Cys37 each coordinate [4Fe-4S] cluster. Tyr39 is an S-adenosyl-L-methionine binding site. [4Fe-4S] cluster is bound at residue Cys40. Arg76 contacts GTP. Residue Gly80 participates in S-adenosyl-L-methionine binding. Thr107 contacts GTP. Position 131 (Ser131) interacts with S-adenosyl-L-methionine. A GTP-binding site is contributed by Lys168. Met202 serves as a coordination point for S-adenosyl-L-methionine. The [4Fe-4S] cluster site is built by Cys265 and Cys268. 270-272 (RLR) is a GTP binding site. [4Fe-4S] cluster is bound at residue Cys282.

It belongs to the radical SAM superfamily. MoaA family. As to quaternary structure, monomer and homodimer. [4Fe-4S] cluster is required as a cofactor.

It catalyses the reaction GTP + AH2 + S-adenosyl-L-methionine = (8S)-3',8-cyclo-7,8-dihydroguanosine 5'-triphosphate + 5'-deoxyadenosine + L-methionine + A + H(+). It participates in cofactor biosynthesis; molybdopterin biosynthesis. Functionally, catalyzes the cyclization of GTP to (8S)-3',8-cyclo-7,8-dihydroguanosine 5'-triphosphate. The polypeptide is GTP 3',8-cyclase (Mannheimia succiniciproducens (strain KCTC 0769BP / MBEL55E)).